Reading from the N-terminus, the 122-residue chain is NADH-quinone oxidoreductase subunit A (122 aa).

A run of 3 helical transmembrane segments spans residues 12–32, 67–87, and 91–111; these read ILLFILVGLAIGVLSMLAGWL, IAILFILFDLEIAFLFPWAVV, and IGWFGFVAMLVFLGLLVVGFI.

Belongs to the complex I subunit 3 family. In terms of assembly, NDH-1 is composed of 14 different subunits. Subunits NuoA, H, J, K, L, M, N constitute the membrane sector of the complex.

It is found in the cell inner membrane. It carries out the reaction a quinone + NADH + 5 H(+)(in) = a quinol + NAD(+) + 4 H(+)(out). NDH-1 shuttles electrons from NADH, via FMN and iron-sulfur (Fe-S) centers, to quinones in the respiratory chain. The immediate electron acceptor for the enzyme in this species is believed to be ubiquinone. Couples the redox reaction to proton translocation (for every two electrons transferred, four hydrogen ions are translocated across the cytoplasmic membrane), and thus conserves the redox energy in a proton gradient. The chain is NADH-quinone oxidoreductase subunit A from Nitrosomonas europaea (strain ATCC 19718 / CIP 103999 / KCTC 2705 / NBRC 14298).